The primary structure comprises 215 residues: MNIILMGPPGAGKGTQAELLKARFPIPHISTGDIFRDAVNQGSELGQEAQKYMSSGQLVPDEITTAIVKERITQADCDSGFLLDGFPRTTDQAQALDQSLAELGKKVDLAINIDVPTQLLIERLSGRISCRECKRVYNLNFNPPREQGKCDSCGGELVQRNDDRGETVVKRLEVYNQQTRPLLQYYEAQGVLFNIEGSRGSGQVFADIQEKLESL.

10–15 (GAGKGT) serves as a coordination point for ATP. The segment at 30–59 (STGDIFRDAVNQGSELGQEAQKYMSSGQLV) is NMP. AMP contacts are provided by residues Thr31, Arg36, 57 to 59 (QLV), 85 to 88 (GFPR), and Gln92. The tract at residues 126–163 (GRISCRECKRVYNLNFNPPREQGKCDSCGGELVQRNDD) is LID. Residue Arg127 coordinates ATP. Positions 130 and 133 each coordinate Zn(2+). 136 to 137 (VY) provides a ligand contact to ATP. Zn(2+)-binding residues include Cys150 and Cys153. Arg160 and Arg171 together coordinate AMP. ATP is bound at residue Arg199.

It belongs to the adenylate kinase family. As to quaternary structure, monomer.

It is found in the cytoplasm. The catalysed reaction is AMP + ATP = 2 ADP. It functions in the pathway purine metabolism; AMP biosynthesis via salvage pathway; AMP from ADP: step 1/1. In terms of biological role, catalyzes the reversible transfer of the terminal phosphate group between ATP and AMP. Plays an important role in cellular energy homeostasis and in adenine nucleotide metabolism. The chain is Adenylate kinase from Syntrophomonas wolfei subsp. wolfei (strain DSM 2245B / Goettingen).